The chain runs to 311 residues: Putative S-adenosyl-L-methionine-dependent methyltransferase MSMEG_0095/MSMEI_0092 (311 aa).

S-adenosyl-L-methionine contacts are provided by residues Asp134 and 163–164 (DL).

Belongs to the UPF0677 family.

Exhibits S-adenosyl-L-methionine-dependent methyltransferase activity. The chain is Putative S-adenosyl-L-methionine-dependent methyltransferase MSMEG_0095/MSMEI_0092 from Mycolicibacterium smegmatis (strain ATCC 700084 / mc(2)155) (Mycobacterium smegmatis).